We begin with the raw amino-acid sequence, 728 residues long: MSSRIDRDVINALIAGHFADPFSVLGMHQTQAGLEVRALLPDATDVWVIEPKTGRKVGKLECLDARGFFCGVLPRRKNFFRYQLAVTWHGQQNLIDDPYRFGPLIQEMDAWLLSEGTHLRPYETLGAHADTMDGVTGTRFSVWAPNARRVSVVGQFNYWDGRRHPMRLRKESGIWELFIPGAHNGQLYKFELLDANGNLRIKADPYAFEAQMRPETASMICGLPEKVTPSEERQKANQFDAPISIYEVHLGSWRRHTDNNFWLSYRELADQLVPYAKWMGFTHLELLPVNEHPFDGSWGYQPTGLYAPTRRFGTRDDFRYFINAAHAAGLNVILDWVPGHFPSDEFSLAEFDGTHLYEHSDPREGYHQDWNTLIYNYGRREVSNYLVGNALYWMERFGIDALRVDAVASMIYRDYSRKEGEWIPNEFGGRENLEAIEFLRNTNRIIGEQVPGAVSMAEESTDFAGVTRPPETGGLGFWFKWNLGWMHDTLDYMKLDPVYRQYHHDKLTFGMLYNHTENFVLPLSHDEVVHGKKSILDRMPGDAWQKFANLRAYYGWMWAFPGKKLLFMGNEFAQGREWNHDASLDWHLLEGGDNWHHGVQRLVRDLNHTYRHHKALHELDFDAYGFEWLVVDDNERSVLIFVRRDKAGNEIIVASNFTPVPRHDYRFGINQPGRWREILNTDSMHYHGSNTGNGGVVHSDEIESHGRQHSLNLTLPPLATIWLMREGE.

The active-site Nucleophile is the aspartate 405. Glutamate 458 serves as the catalytic Proton donor.

It belongs to the glycosyl hydrolase 13 family. GlgB subfamily. As to quaternary structure, monomer.

It catalyses the reaction Transfers a segment of a (1-&gt;4)-alpha-D-glucan chain to a primary hydroxy group in a similar glucan chain.. Its pathway is glycan biosynthesis; glycogen biosynthesis. Catalyzes the formation of the alpha-1,6-glucosidic linkages in glycogen by scission of a 1,4-alpha-linked oligosaccharide from growing alpha-1,4-glucan chains and the subsequent attachment of the oligosaccharide to the alpha-1,6 position. The protein is 1,4-alpha-glucan branching enzyme GlgB of Salmonella paratyphi B (strain ATCC BAA-1250 / SPB7).